Consider the following 116-residue polypeptide: Large ribosomal subunit protein P2 (116 aa).

The tract at residues 60-116 (GKLSSMPSGGGVAAAAGGGGAAAGGGGAAPAAEEKKEEKKEESEEESDDDMGFGLFD) is disordered. A compositionally biased stretch (gly residues) spans 67-87 (SGGGVAAAAGGGGAAAGGGGA). Residues 91–101 (AEEKKEEKKEE) are compositionally biased toward basic and acidic residues.

The protein belongs to the eukaryotic ribosomal protein P1/P2 family. P1 and P2 exist as dimers at the large ribosomal subunit. Post-translationally, phosphorylated.

Plays an important role in the elongation step of protein synthesis. This Branchiostoma floridae (Florida lancelet) protein is Large ribosomal subunit protein P2.